The sequence spans 789 residues: Ent-kaur-16-ene synthase, chloroplastic (789 aa).

Mg(2+) is bound by residues Asp536, Asp540, Asn680, Ser684, and Glu688. The short motif at 536 to 540 (DDFYD) is the DDXXD motif element.

The protein belongs to the terpene synthase family. Mg(2+) is required as a cofactor. Post-translationally, the N-terminus is blocked. Abundant in most tissues. Present in low amounts in mature cotyledons.

Its subcellular location is the plastid. The protein resides in the chloroplast. It carries out the reaction ent-copalyl diphosphate = ent-kaur-16-ene + diphosphate. Its pathway is plant hormone biosynthesis; gibberellin biosynthesis. In terms of biological role, catalyzes the conversion of ent-copalyl diphosphate to the gibberellin precursor ent-kaur-16-ene. This chain is Ent-kaur-16-ene synthase, chloroplastic, found in Cucurbita maxima (Pumpkin).